The sequence spans 382 residues: V-type proton ATPase subunit C 1 (382 aa).

At Thr-2 the chain carries N-acetylthreonine.

This sequence belongs to the V-ATPase C subunit family. V-ATPase is a heteromultimeric enzyme made up of two complexes: the ATP-hydrolytic V1 complex and the proton translocation V0 complex. The V1 complex consists of three catalytic AB heterodimers that form a heterohexamer, three peripheral stalks each consisting of EG heterodimers, one central rotor including subunits D and F, and the regulatory subunits C and H. The proton translocation complex V0 consists of the proton transport subunit a, a ring of proteolipid subunits c9c'', rotary subunit d, subunits e and f, and the accessory subunits ATP6AP1/Ac45 and ATP6AP2/PRR.

It localises to the cytoplasmic vesicle. The protein resides in the secretory vesicle. It is found in the synaptic vesicle membrane. The protein localises to the clathrin-coated vesicle membrane. Subunit of the V1 complex of vacuolar(H+)-ATPase (V-ATPase), a multisubunit enzyme composed of a peripheral complex (V1) that hydrolyzes ATP and a membrane integral complex (V0) that translocates protons. V-ATPase is responsible for acidifying and maintaining the pH of intracellular compartments and in some cell types, is targeted to the plasma membrane, where it is responsible for acidifying the extracellular environment. Subunit C is necessary for the assembly of the catalytic sector of the enzyme and is likely to have a specific function in its catalytic activity. The protein is V-type proton ATPase subunit C 1 (ATP6V1C1) of Macaca fascicularis (Crab-eating macaque).